The sequence spans 336 residues: Probable allantoicase (336 aa).

The protein belongs to the allantoicase family.

It carries out the reaction allantoate + H2O = (S)-ureidoglycolate + urea. It functions in the pathway nitrogen metabolism; (S)-allantoin degradation; (S)-ureidoglycolate from allantoate (aminidohydrolase route): step 1/1. The protein is Probable allantoicase of Acinetobacter baumannii (strain ACICU).